A 504-amino-acid polypeptide reads, in one-letter code: Arabinose import ATP-binding protein AraG (504 aa).

2 consecutive ABC transporter domains span residues 8 to 243 (LSFR…MVGR) and 256 to 499 (YGEE…MPKV). 40–47 (GENGAGKS) is a binding site for ATP.

Belongs to the ABC transporter superfamily. Arabinose importer (TC 3.A.1.2.2) family. The complex is composed of two ATP-binding proteins (AraG), two transmembrane proteins (AraH) and a solute-binding protein (AraF).

It localises to the cell inner membrane. It carries out the reaction L-arabinose(out) + ATP + H2O = L-arabinose(in) + ADP + phosphate + H(+). Part of the ABC transporter complex AraFGH involved in arabinose import. Responsible for energy coupling to the transport system. The polypeptide is Arabinose import ATP-binding protein AraG (Escherichia coli O157:H7).